Here is a 699-residue protein sequence, read N- to C-terminus: Conditioned medium factor (699 aa).

Residues 1-18 (MRLLLLLILIITINFSYG) form the signal peptide. 4 N-linked (GlcNAc...) asparagine glycosylation sites follow: Asn-130, Asn-283, Asn-346, and Asn-430. The interval 680–699 (SPQQTTNTEYNKEMSSNSVW) is disordered.

N- and O-glycosylated. In terms of processing, the N-terminus is blocked.

In terms of biological role, involved in cell density sensing and might synchronize the onset of development by triggering aggregation when a majority of the cells in a given area have starved. The chain is Conditioned medium factor (cmfA) from Dictyostelium discoideum (Social amoeba).